Consider the following 480-residue polypeptide: Trigger factor (480 aa).

The PPIase FKBP-type domain occupies Gly-161 to Pro-249. Residues Thr-426–Asp-480 form a disordered region. Basic and acidic residues predominate over residues Pro-429–Asp-480.

It belongs to the FKBP-type PPIase family. Tig subfamily.

The protein localises to the cytoplasm. The catalysed reaction is [protein]-peptidylproline (omega=180) = [protein]-peptidylproline (omega=0). Involved in protein export. Acts as a chaperone by maintaining the newly synthesized protein in an open conformation. Functions as a peptidyl-prolyl cis-trans isomerase. In Rhodopirellula baltica (strain DSM 10527 / NCIMB 13988 / SH1), this protein is Trigger factor.